A 468-amino-acid chain; its full sequence is MQNMMNTSQSFQNDSVLIGDKNTLQSINKSVDNGSKNTHGITGIMNLGNTCYMNSALQALSHNYLLINYLFMNKKQIIRTLLTNARKIFKDCDNFKIESTISPIPLELRKKIQSENYHLSMLTVEDVNILLNNTITAQIIRLFECMWKNNCVVVPTSFRKVFGEVRDKFFFGYEQHDAEEAYSCIIQKMQEELAEKRTIRFKTTRHSVGEYIKYMNDVKEKVSCLPNGKEKDIVMNKFKQIKKQMPRESLTAESFREMKKYYEQGYSYITEIFSGYVHSSICCPNTSCGFTNDRFDAFTHLSLSIPVKNMYEQLNVYDCLREYFSQETLDADNLWNCEGCHEKVQAIKKTKLWTTPYVLVIQFKRFGMTRIAKDNRFINYPMDELDVSSVICSQQFEDSVQTKYKLQCVINHHGGLNNGHYFTYSKIENTGEWYEFNDTYTGKVTDNHIVNQNAYILFYIRSDLFRSQ.

In terms of domain architecture, USP spans 42–462 (TGIMNLGNTC…NAYILFYIRS (421 aa)). Cys51 acts as the Nucleophile in catalysis. Catalysis depends on His420, which acts as the Proton acceptor.

Belongs to the peptidase C19 family.

The enzyme catalyses Thiol-dependent hydrolysis of ester, thioester, amide, peptide and isopeptide bonds formed by the C-terminal Gly of ubiquitin (a 76-residue protein attached to proteins as an intracellular targeting signal).. The chain is Probable ubiquitin carboxyl-terminal hydrolase R319 from Acanthamoeba polyphaga (Amoeba).